The chain runs to 287 residues: Shikimate dehydrogenase (NADP(+)) (287 aa).

Shikimate contacts are provided by residues 21-23 and Thr-68; that span reads SKS. The active-site Proton acceptor is Lys-72. Shikimate contacts are provided by Asn-93 and Asp-109. Residues 133-137, 157-162, and Met-226 each bind NADP(+); these read GAGGA and NRTQTK. A shikimate-binding site is contributed by Tyr-228. Position 250 (Gly-250) interacts with NADP(+).

It belongs to the shikimate dehydrogenase family. As to quaternary structure, homodimer.

The enzyme catalyses shikimate + NADP(+) = 3-dehydroshikimate + NADPH + H(+). Its pathway is metabolic intermediate biosynthesis; chorismate biosynthesis; chorismate from D-erythrose 4-phosphate and phosphoenolpyruvate: step 4/7. Functionally, involved in the biosynthesis of the chorismate, which leads to the biosynthesis of aromatic amino acids. Catalyzes the reversible NADPH linked reduction of 3-dehydroshikimate (DHSA) to yield shikimate (SA). The protein is Shikimate dehydrogenase (NADP(+)) of Shewanella oneidensis (strain ATCC 700550 / JCM 31522 / CIP 106686 / LMG 19005 / NCIMB 14063 / MR-1).